Reading from the N-terminus, the 134-residue chain is RxLR effector protein Avh238 (134 aa).

Positions 1–21 are cleaved as a signal peptide; the sequence is MRGVFFVAVAVAIFARSSAEA. Positions 44–68 match the RxLR-dEER motif; it reads RFLRVADPEDDDLAAPADDGKTEER. The tract at residues 49-70 is disordered; sequence ADPEDDDLAAPADDGKTEERAP. Residues 61–70 are compositionally biased toward basic and acidic residues; the sequence is DDGKTEERAP.

The protein belongs to the RxLR effector family. In terms of assembly, interacts with host 1-aminocyclopropane-1-carboxylate synthases ACS1, ACS2, ACS3, ACS10 and ACS12.

Its subcellular location is the secreted. The protein resides in the host cytoplasm. The protein localises to the host nucleus. In terms of biological role, effector that suppresses plant defense responses during the early stages of pathogen infection. Suppresses cell death induced by effectors and PAMPs in plant hosts. Is able to induced cell death in tomato, tobacco, eggplant, and potato, but not in A.thaliana. Interacts with and destabilizes host 1-aminocyclopropane-1-carboxylate synthases. By suppressing type2 ACS-catalyzed ethylene biosynthesis, Avh238 facilitates Phytophthora infection. The protein is RxLR effector protein Avh238 (Avh238) of Phytophthora sojae (strain P6497) (Soybean stem and root rot agent).